The following is a 622-amino-acid chain: Iron transport multicopper oxidase fio1 (622 aa).

The signal sequence occupies residues M1 to A22. Topologically, residues K23–K553 are extracellular. N30 and N79 each carry an N-linked (GlcNAc...) asparagine glycan. Plastocyanin-like domains are found at residues I49 to N147 and T194 to N304. Residues H85 and H87 each contribute to the Cu cation site. N117 and N123 each carry an N-linked (GlcNAc...) asparagine glycan. H129 and H131 together coordinate Cu cation. N-linked (GlcNAc...) asparagine glycans are attached at residues N198, N202, N234, N269, N296, N338, N360, and N376. Residues E386–A498 enclose the Plastocyanin-like 3 domain. Cu cation contacts are provided by H417, H420, H422, H480, C481, H482, and H486. An N-linked (GlcNAc...) asparagine glycan is attached at N532. Residues A554 to F574 form a helical membrane-spanning segment. Topologically, residues Y575 to K622 are cytoplasmic.

It belongs to the multicopper oxidase family. Cu cation is required as a cofactor.

Its subcellular location is the cell membrane. Could be an iron transport multicopper oxidase, which is required for Fe(2+) high affinity uptake. May be required to oxidize Fe(2+) and release it from the transporter. Essential component of copper-dependent iron transport. The chain is Iron transport multicopper oxidase fio1 (fio1) from Schizosaccharomyces pombe (strain 972 / ATCC 24843) (Fission yeast).